The chain runs to 331 residues: L-lactate dehydrogenase A chain (331 aa).

Residues 29-57 and arginine 98 each bind NAD(+); that span reads GMVG…MEDK. Positions 105, 137, and 168 each coordinate substrate. Asparagine 137 lines the NAD(+) pocket. Histidine 192 functions as the Proton acceptor in the catalytic mechanism. Residue threonine 247 coordinates substrate.

It belongs to the LDH/MDH superfamily. LDH family. In terms of assembly, homotetramer.

The protein localises to the cytoplasm. The catalysed reaction is (S)-lactate + NAD(+) = pyruvate + NADH + H(+). It participates in fermentation; pyruvate fermentation to lactate; (S)-lactate from pyruvate: step 1/1. Interconverts simultaneously and stereospecifically pyruvate and lactate with concomitant interconversion of NADH and NAD(+). This Parachaenichthys charcoti (Charcot's dragonfish) protein is L-lactate dehydrogenase A chain (ldha).